We begin with the raw amino-acid sequence, 323 residues long: Aldo-keto reductase family 1 member C1 (323 aa).

Residues 20-24 and D50 each bind NADP(+); that span reads GFGTY. Y24 lines the substrate pocket. The active-site Proton donor is Y55. H117 contributes to the substrate binding site. NADP(+)-binding positions include 166–167, Q190, and 216–222; these read SN and YSALGSH. H222 and W227 together coordinate substrate. NADP(+) is bound at residue 270–280; sequence KSYNEQRIRQN.

It belongs to the aldo/keto reductase family. In terms of assembly, monomer. In terms of tissue distribution, expressed in all tissues tested including liver, prostate, testis, adrenal gland, brain, uterus, mammary gland and keratinocytes. Highest levels found in liver, mammary gland and brain.

The protein localises to the cytoplasm. Its subcellular location is the cytosol. The enzyme catalyses a 3alpha-hydroxysteroid + NADP(+) = a 3-oxosteroid + NADPH + H(+). The catalysed reaction is a 3alpha-hydroxysteroid + NAD(+) = a 3-oxosteroid + NADH + H(+). It catalyses the reaction (17R,20S)-17,20-dihydroxypregn-4-en-3-one + NADP(+) = 17alpha-hydroxyprogesterone + NADPH + H(+). It carries out the reaction (17R,20S)-17,20-dihydroxypregn-4-en-3-one + NAD(+) = 17alpha-hydroxyprogesterone + NADH + H(+). The enzyme catalyses (20S)-hydroxypregn-4-en-3-one + NADP(+) = progesterone + NADPH + H(+). The catalysed reaction is (20S)-hydroxypregn-4-en-3-one + NAD(+) = progesterone + NADH + H(+). It catalyses the reaction (1R,2R)-1,2-dihydrobenzene-1,2-diol + NADP(+) = catechol + NADPH + H(+). It carries out the reaction (S)-indan-1-ol + NAD(+) = indan-1-one + NADH + H(+). The enzyme catalyses (S)-indan-1-ol + NADP(+) = indan-1-one + NADPH + H(+). The catalysed reaction is 5alpha-androstane-3alpha,17beta-diol + NADP(+) = 17beta-hydroxy-5alpha-androstan-3-one + NADPH + H(+). It catalyses the reaction 5alpha-androstane-3beta,17beta-diol + NADP(+) = 17beta-hydroxy-5alpha-androstan-3-one + NADPH + H(+). It carries out the reaction 5alpha-androstane-3alpha,17beta-diol + NAD(+) = 17beta-hydroxy-5alpha-androstan-3-one + NADH + H(+). The enzyme catalyses 17beta-hydroxy-5alpha-androstan-3-one + NADP(+) = 5alpha-androstan-3,17-dione + NADPH + H(+). The catalysed reaction is androsterone + NADP(+) = 5alpha-androstan-3,17-dione + NADPH + H(+). It catalyses the reaction androsterone + NADPH + H(+) = 5alpha-androstane-3alpha,17beta-diol + NADP(+). It carries out the reaction 5alpha-androstane-3alpha,17beta-diol + NAD(+) = androsterone + NADH + H(+). The enzyme catalyses 17beta-estradiol + NADP(+) = estrone + NADPH + H(+). The catalysed reaction is 17beta-estradiol + NAD(+) = estrone + NADH + H(+). It catalyses the reaction testosterone + NADP(+) = androst-4-ene-3,17-dione + NADPH + H(+). It carries out the reaction 20alpha-hydroxy-5beta-pregnan-3-one + NADP(+) = 5beta-pregnan-3,20-dione + NADPH + H(+). The enzyme catalyses 3beta-hydroxy-5beta-pregnane-20-one + NADP(+) = 5beta-pregnan-3,20-dione + NADPH + H(+). The catalysed reaction is 3beta-hydroxy-5beta-pregnane-20-one + NADPH + H(+) = 3beta,20alpha-dihydroxy-5beta-pregnane + NADP(+). It catalyses the reaction (3beta,5alpha,17beta)-3-hydroxyandrostan-17-yl sulfate + NADP(+) = 5alpha-dihydrotestosterone sulfate + NADPH + H(+). It participates in steroid metabolism. With respect to regulation, inhibited by hexestrol with an IC(50) of 9.5 uM, 1,10-phenanthroline with an IC(50) of 55 uM, 1,7-phenanthroline with an IC(50) of 72 uM, flufenamic acid with an IC(50) of 6.0 uM, indomethacin with an IC(50) of 140 uM, ibuprofen with an IC(50) of 950 uM, lithocholic acid with an IC(50) of 25 uM, ursodeoxycholic acid with an IC(50) of 340 uM and chenodeoxycholic acid with an IC(50) of 570 uM. The oxidation reaction is inhibited by low micromolar concentrations of NADPH. Functionally, cytosolic aldo-keto reductase that catalyzes the NADH and NADPH-dependent reduction of ketosteroids to hydroxysteroids. Most probably acts as a reductase in vivo since the oxidase activity measured in vitro is inhibited by physiological concentrations of NADPH. Displays a broad positional specificity acting on positions 3, 17 and 20 of steroids and regulates the metabolism of hormones like estrogens and androgens. May also reduce conjugated steroids such as 5alpha-dihydrotestosterone sulfate. Displays affinity for bile acids. This is Aldo-keto reductase family 1 member C1 (AKR1C1) from Homo sapiens (Human).